Consider the following 255-residue polypeptide: 5'-nucleotidase SurE (255 aa).

D8, D9, S39, and N91 together coordinate a divalent metal cation.

Belongs to the SurE nucleotidase family. Requires a divalent metal cation as cofactor.

It localises to the cytoplasm. It catalyses the reaction a ribonucleoside 5'-phosphate + H2O = a ribonucleoside + phosphate. In terms of biological role, nucleotidase that shows phosphatase activity on nucleoside 5'-monophosphates. The protein is 5'-nucleotidase SurE of Acinetobacter baumannii (strain SDF).